The sequence spans 239 residues: Ribonuclease PH (239 aa).

Phosphate is bound by residues R87 and 125-127 (GTR).

Belongs to the RNase PH family. In terms of assembly, homohexameric ring arranged as a trimer of dimers.

It carries out the reaction tRNA(n+1) + phosphate = tRNA(n) + a ribonucleoside 5'-diphosphate. Functionally, phosphorolytic 3'-5' exoribonuclease that plays an important role in tRNA 3'-end maturation. Removes nucleotide residues following the 3'-CCA terminus of tRNAs; can also add nucleotides to the ends of RNA molecules by using nucleoside diphosphates as substrates, but this may not be physiologically important. Probably plays a role in initiation of 16S rRNA degradation (leading to ribosome degradation) during starvation. The sequence is that of Ribonuclease PH from Pseudomonas aeruginosa (strain LESB58).